The following is a 437-amino-acid chain: tRNA-2-methylthio-N(6)-dimethylallyladenosine synthase (437 aa).

Positions 5–121 (KKLYIKTYGC…LPELTARAAT (117 aa)) constitute an MTTase N-terminal domain. 6 residues coordinate [4Fe-4S] cluster: Cys-14, Cys-50, Cys-84, Cys-159, Cys-163, and Cys-166. Positions 145 to 371 (AKRGPTAFLT…QALLTRQQRA (227 aa)) constitute a Radical SAM core domain. The TRAM domain occupies 374–436 (DAKVGTTARV…ANSLRGVLIA (63 aa)).

This sequence belongs to the methylthiotransferase family. MiaB subfamily. As to quaternary structure, monomer. It depends on [4Fe-4S] cluster as a cofactor.

It localises to the cytoplasm. The catalysed reaction is N(6)-dimethylallyladenosine(37) in tRNA + (sulfur carrier)-SH + AH2 + 2 S-adenosyl-L-methionine = 2-methylsulfanyl-N(6)-dimethylallyladenosine(37) in tRNA + (sulfur carrier)-H + 5'-deoxyadenosine + L-methionine + A + S-adenosyl-L-homocysteine + 2 H(+). Catalyzes the methylthiolation of N6-(dimethylallyl)adenosine (i(6)A), leading to the formation of 2-methylthio-N6-(dimethylallyl)adenosine (ms(2)i(6)A) at position 37 in tRNAs that read codons beginning with uridine. The sequence is that of tRNA-2-methylthio-N(6)-dimethylallyladenosine synthase from Dinoroseobacter shibae (strain DSM 16493 / NCIMB 14021 / DFL 12).